We begin with the raw amino-acid sequence, 66 residues long: Phylloseptin-S3 (66 aa).

Residues 1-22 form the signal peptide; the sequence is MAFLKKSLFLVLFLGLVSLSIC. A propeptide spanning residues 23–46 is cleaved from the precursor; it reads EEEKRETEEEEHDQEEDDKSEEKR. Residues 25 to 44 are disordered; it reads EKRETEEEEHDQEEDDKSEE. Residues 30 to 41 are compositionally biased toward acidic residues; sequence EEEEHDQEEDDK. Phenylalanine 65 bears the Phenylalanine amide mark.

Belongs to the frog skin active peptide (FSAP) family. Phylloseptin subfamily. In terms of tissue distribution, expressed by the skin glands.

Its subcellular location is the secreted. The protein resides in the target cell membrane. Its function is as follows. Antimicrobial peptide with activity against the Gram-positive S.pyogenes (MIC=12.5 uM), but not against all other bacteria tested (both Gram-positive and Gram-negative). Does not show activity against fungi, and against Leishmania species. The sequence is that of Phylloseptin-S3 from Phyllomedusa sauvagei (Sauvage's leaf frog).